The chain runs to 95 residues: MRVTATFDKVADIIAETSEIDRETIKPESHTIDDLGIDSLDFLDIVFAIDKEFGIKIPLEQWTQEVNEGKVSTEEYFVLKNLCAKIDELRAAKAG.

Positions 4–90 (TATFDKVADI…NLCAKIDELR (87 aa)) constitute a Carrier domain. O-(pantetheine 4'-phosphoryl)serine is present on serine 39.

Post-translationally, 4'-phosphopantetheine is transferred from CoA to a specific serine of apo-ACP by AcpS. This modification is essential for activity because fatty acids are bound in thioester linkage to the sulfhydryl of the prosthetic group.

The protein localises to the cytoplasm. It functions in the pathway glycolipid biosynthesis; KDO(2)-lipid A biosynthesis. In terms of biological role, carrier of the growing fatty acid chain in fatty acid biosynthesis. Is involved in the transfer of long hydroxylated fatty acids to lipid A. This is Acyl carrier protein AcpXL (acpXL) from Rhizobium meliloti (strain 1021) (Ensifer meliloti).